The following is a 482-amino-acid chain: Malvidin galactosylase UGT88C3 (482 aa).

Residue histidine 16 is the Proton acceptor of the active site. The active-site Charge relay is the aspartate 117. UDP-binding residues include serine 279, tryptophan 345, alanine 349, histidine 366, asparagine 370, serine 371, and glutamate 374.

This sequence belongs to the UDP-glycosyltransferase family.

It is found in the endoplasmic reticulum. It localises to the nucleus. The enzyme catalyses malvidin + UDP-alpha-D-galactose = malvidin 3-O-beta-D-galactoside + UDP + H(+). The protein operates within pigment biosynthesis; anthocyanin biosynthesis. Its function is as follows. UDP-glycosyltransferase which uses UDP-galactose and malvidin as substrates to catalyze the biosynthesis of malvidin 3-O-galactoside, an anthocyanin conferring purple pigmentation. The sequence is that of Malvidin galactosylase UGT88C3 from Oryza sativa subsp. indica (Rice).